Here is a 597-residue protein sequence, read N- to C-terminus: Arginine--tRNA ligase (597 aa).

Positions 23–32 (QAAAARQASQ) are enriched in low complexity. The tract at residues 23–43 (QAAAARQASQPLDPQLAPASK) is disordered. A 'HIGH' region motif is present at residues 137-147 (PNIAKEMHVGH).

The protein belongs to the class-I aminoacyl-tRNA synthetase family. As to quaternary structure, monomer.

Its subcellular location is the cytoplasm. The enzyme catalyses tRNA(Arg) + L-arginine + ATP = L-arginyl-tRNA(Arg) + AMP + diphosphate. The polypeptide is Arginine--tRNA ligase (Synechococcus sp. (strain WH7803)).